The primary structure comprises 128 residues: Large ribosomal subunit protein uL22 (128 aa).

It belongs to the universal ribosomal protein uL22 family. In terms of assembly, part of the 50S ribosomal subunit.

This protein binds specifically to 23S rRNA; its binding is stimulated by other ribosomal proteins, e.g. L4, L17, and L20. It is important during the early stages of 50S assembly. It makes multiple contacts with different domains of the 23S rRNA in the assembled 50S subunit and ribosome. In terms of biological role, the globular domain of the protein is located near the polypeptide exit tunnel on the outside of the subunit, while an extended beta-hairpin is found that lines the wall of the exit tunnel in the center of the 70S ribosome. In Rhodopseudomonas palustris (strain HaA2), this protein is Large ribosomal subunit protein uL22.